Here is a 326-residue protein sequence, read N- to C-terminus: Iron-sulfur cluster assembly SufBD family protein PH0883 (326 aa).

This sequence belongs to the iron-sulfur cluster assembly SufBD family.

This chain is Iron-sulfur cluster assembly SufBD family protein PH0883, found in Pyrococcus horikoshii (strain ATCC 700860 / DSM 12428 / JCM 9974 / NBRC 100139 / OT-3).